The sequence spans 218 residues: Small ribosomal subunit protein uS3 (218 aa).

The 69-residue stretch at 38–106 (IREFISKRLS…RVHINILEIK (69 aa)) folds into the KH type-2 domain.

Belongs to the universal ribosomal protein uS3 family. In terms of assembly, part of the 30S ribosomal subunit. Forms a tight complex with proteins S10 and S14.

Functionally, binds the lower part of the 30S subunit head. Binds mRNA in the 70S ribosome, positioning it for translation. The chain is Small ribosomal subunit protein uS3 from Bacillus velezensis (strain DSM 23117 / BGSC 10A6 / LMG 26770 / FZB42) (Bacillus amyloliquefaciens subsp. plantarum).